A 289-amino-acid polypeptide reads, in one-letter code: uncharacterized protein (289 aa).

A signal peptide spans 1–19; it reads MAKWLGAPLARGVSTATRA. 2 consecutive transmembrane segments (helical) span residues 90-110 and 257-277; these read GLLA…GWGV and AALS…LVFA.

It is found in the cell membrane. This is an uncharacterized protein from Mycobacterium tuberculosis (strain ATCC 25618 / H37Rv).